We begin with the raw amino-acid sequence, 286 residues long: Shikimate dehydrogenase (NADP(+)) (286 aa).

Shikimate is bound by residues 19-21 (SFS) and Thr-66. Residue Lys-70 is the Proton acceptor of the active site. 2 residues coordinate shikimate: Asn-91 and Asp-107. Residues 129-133 (GSGGA) and Leu-229 contribute to the NADP(+) site. Shikimate is bound at residue Tyr-231. Gly-252 is an NADP(+) binding site.

Belongs to the shikimate dehydrogenase family. As to quaternary structure, homodimer.

It catalyses the reaction shikimate + NADP(+) = 3-dehydroshikimate + NADPH + H(+). Its pathway is metabolic intermediate biosynthesis; chorismate biosynthesis; chorismate from D-erythrose 4-phosphate and phosphoenolpyruvate: step 4/7. Involved in the biosynthesis of the chorismate, which leads to the biosynthesis of aromatic amino acids. Catalyzes the reversible NADPH linked reduction of 3-dehydroshikimate (DHSA) to yield shikimate (SA). In Prochlorococcus marinus (strain MIT 9301), this protein is Shikimate dehydrogenase (NADP(+)).